We begin with the raw amino-acid sequence, 358 residues long: tRNA-specific 2-thiouridylase MnmA (358 aa).

ATP is bound by residues 6–13 (ALSGGVDS) and Met-32. Cys-103 functions as the Nucleophile in the catalytic mechanism. Cysteines 103 and 201 form a disulfide. Residue Gly-127 coordinates ATP. The interaction with tRNA stretch occupies residues 151–153 (KDQ). Catalysis depends on Cys-201, which acts as the Cysteine persulfide intermediate.

This sequence belongs to the MnmA/TRMU family.

The protein localises to the cytoplasm. It carries out the reaction S-sulfanyl-L-cysteinyl-[protein] + uridine(34) in tRNA + AH2 + ATP = 2-thiouridine(34) in tRNA + L-cysteinyl-[protein] + A + AMP + diphosphate + H(+). Catalyzes the 2-thiolation of uridine at the wobble position (U34) of tRNA, leading to the formation of s(2)U34. The sequence is that of tRNA-specific 2-thiouridylase MnmA from Thermotoga sp. (strain RQ2).